Reading from the N-terminus, the 386-residue chain is Putrescine N-methyltransferase 4 (386 aa).

3 stretches are compositionally biased toward polar residues: residues 1–14, 23–48, and 57–87; these read MEVI…STIF, GHQS…GHHN, and HQNG…NGNE. The tract at residues 1–87 is disordered; it reads MEVISTNTNG…GTISHDNGNE (87 aa). Positions 97 to 334 constitute a PABS domain; sequence LGWFSEFSAL…GVIGYMLCST (238 aa). Residues Gln128, Glu203, and 234 to 235 contribute to the S-adenosyl-L-methionine site; that span reads DG. The active-site Proton acceptor is Asp253. Residue Tyr322 coordinates S-adenosyl-L-methionine.

It belongs to the class I-like SAM-binding methyltransferase superfamily. Putrescine methyltransferase family. As to expression, predominantly expressed in roots.

It carries out the reaction putrescine + S-adenosyl-L-methionine = N-methylputrescine + S-adenosyl-L-homocysteine + H(+). It functions in the pathway alkaloid biosynthesis; nicotine biosynthesis. In terms of biological role, involved in the biosynthesis of pyridine alkaloid natural products, leading mainly to the production of anabasine, anatabine, nicotine and nornicotine, effective deterrents against herbivores with antiparasitic and pesticide properties (neurotoxins); nornicotine serves as the precursor in the synthesis of the carcinogen compound N'-nitrosonornicotine (NNN). Methyltransferase that mediates the conversion of putrescine to N-methylputrescine. Promotes leaves ripening. This Nicotiana tabacum (Common tobacco) protein is Putrescine N-methyltransferase 4.